We begin with the raw amino-acid sequence, 168 residues long: Phosphopantetheine adenylyltransferase (168 aa).

Ser-8 is a binding site for substrate. ATP contacts are provided by residues 8-9 and His-16; that span reads SF. 3 residues coordinate substrate: Lys-40, Ala-72, and Arg-86. ATP-binding positions include 87 to 89, Glu-97, and 122 to 128; these read GLR and YSFLSSS.

It belongs to the bacterial CoaD family. As to quaternary structure, homohexamer. Mg(2+) serves as cofactor.

Its subcellular location is the cytoplasm. The enzyme catalyses (R)-4'-phosphopantetheine + ATP + H(+) = 3'-dephospho-CoA + diphosphate. It functions in the pathway cofactor biosynthesis; coenzyme A biosynthesis; CoA from (R)-pantothenate: step 4/5. Reversibly transfers an adenylyl group from ATP to 4'-phosphopantetheine, yielding dephospho-CoA (dPCoA) and pyrophosphate. The protein is Phosphopantetheine adenylyltransferase of Trichodesmium erythraeum (strain IMS101).